The following is a 184-amino-acid chain: Peptidyl-tRNA hydrolase (184 aa).

Residue Y14 coordinates tRNA. Catalysis depends on H19, which acts as the Proton acceptor. Positions 60 and 62 each coordinate tRNA.

This sequence belongs to the PTH family. As to quaternary structure, monomer.

It is found in the cytoplasm. The catalysed reaction is an N-acyl-L-alpha-aminoacyl-tRNA + H2O = an N-acyl-L-amino acid + a tRNA + H(+). In terms of biological role, hydrolyzes ribosome-free peptidyl-tRNAs (with 1 or more amino acids incorporated), which drop off the ribosome during protein synthesis, or as a result of ribosome stalling. Catalyzes the release of premature peptidyl moieties from peptidyl-tRNA molecules trapped in stalled 50S ribosomal subunits, and thus maintains levels of free tRNAs and 50S ribosomes. This is Peptidyl-tRNA hydrolase from Mesomycoplasma hyopneumoniae (strain 7448) (Mycoplasma hyopneumoniae).